Consider the following 149-residue polypeptide: Down syndrome critical region protein 9 (149 aa).

A disordered region spans residues 1-41 (MGRICPVNSRARRLRARPGRPSGDSLPYHQLQGGAPRLWSP).

This Pan troglodytes (Chimpanzee) protein is Down syndrome critical region protein 9 (DSCR9).